The sequence spans 206 residues: Large ribosomal subunit protein uL4 (206 aa).

Residues 47-79 (GTKGQKNRSAVRGGGAKPWAQKGSGRARAGTSR) form a disordered region. Residues 69–79 (GSGRARAGTSR) are compositionally biased toward low complexity.

Belongs to the universal ribosomal protein uL4 family. In terms of assembly, part of the 50S ribosomal subunit.

One of the primary rRNA binding proteins, this protein initially binds near the 5'-end of the 23S rRNA. It is important during the early stages of 50S assembly. It makes multiple contacts with different domains of the 23S rRNA in the assembled 50S subunit and ribosome. Its function is as follows. Forms part of the polypeptide exit tunnel. The polypeptide is Large ribosomal subunit protein uL4 (Hydrogenovibrio crunogenus (strain DSM 25203 / XCL-2) (Thiomicrospira crunogena)).